Consider the following 96-residue polypeptide: NADH-ubiquinone oxidoreductase chain 4L (96 aa).

Transmembrane regions (helical) follow at residues 2-22 (LMMF…FVFV), 28-48 (LLSM…LLYI), and 58-78 (FLGM…LSIM).

It belongs to the complex I subunit 4L family.

It localises to the mitochondrion membrane. It carries out the reaction a ubiquinone + NADH + 5 H(+)(in) = a ubiquinol + NAD(+) + 4 H(+)(out). Its function is as follows. Core subunit of the mitochondrial membrane respiratory chain NADH dehydrogenase (Complex I) that is believed to belong to the minimal assembly required for catalysis. Complex I functions in the transfer of electrons from NADH to the respiratory chain. The immediate electron acceptor for the enzyme is believed to be ubiquinone. This Ceratitis capitata (Mediterranean fruit fly) protein is NADH-ubiquinone oxidoreductase chain 4L (ND4L).